Here is a 217-residue protein sequence, read N- to C-terminus: Large ribosomal subunit protein uL3 (217 aa).

This sequence belongs to the universal ribosomal protein uL3 family. In terms of assembly, part of the 50S ribosomal subunit. Forms a cluster with proteins L14 and L19.

Its function is as follows. One of the primary rRNA binding proteins, it binds directly near the 3'-end of the 23S rRNA, where it nucleates assembly of the 50S subunit. This chain is Large ribosomal subunit protein uL3, found in Mycolicibacterium smegmatis (strain ATCC 700084 / mc(2)155) (Mycobacterium smegmatis).